Consider the following 320-residue polypeptide: ATP-dependent 6-phosphofructokinase (320 aa).

Gly12 lines the ATP pocket. ADP-binding positions include 22–26 (RGVVR) and 55–60 (RYSVSD). Residues 73–74 (RF) and 103–106 (GDGS) contribute to the ATP site. Asp104 contacts Mg(2+). 126-128 (TID) lines the substrate pocket. The Proton acceptor role is filled by Asp128. Position 155 (Arg155) interacts with ADP. Substrate is bound by residues Arg163 and 170 to 172 (MGR). Residues 186–188 (GCE), Lys212, and 214–216 (KKH) contribute to the ADP site. Substrate contacts are provided by residues Glu223, Arg244, and 250–253 (HIQR).

This sequence belongs to the phosphofructokinase type A (PFKA) family. ATP-dependent PFK group I subfamily. Prokaryotic clade 'B1' sub-subfamily. In terms of assembly, homotetramer. Mg(2+) serves as cofactor.

The protein resides in the cytoplasm. The enzyme catalyses beta-D-fructose 6-phosphate + ATP = beta-D-fructose 1,6-bisphosphate + ADP + H(+). It participates in carbohydrate degradation; glycolysis; D-glyceraldehyde 3-phosphate and glycerone phosphate from D-glucose: step 3/4. Its activity is regulated as follows. Allosterically activated by ADP and other diphosphonucleosides, and allosterically inhibited by phosphoenolpyruvate. Catalyzes the phosphorylation of D-fructose 6-phosphate to fructose 1,6-bisphosphate by ATP, the first committing step of glycolysis. This chain is ATP-dependent 6-phosphofructokinase, found in Buchnera aphidicola subsp. Acyrthosiphon pisum (strain 5A).